The chain runs to 108 residues: Insulin (108 aa).

The signal sequence occupies residues 1-23 (MALWILLPLLALLILWGPDPAQA). Cystine bridges form between Cys30–Cys94 and Cys43–Cys107. A propeptide spans 57–88 (EVEDPQVGQVELGAGPGAGSEQTLALEVARQA) (c peptide).

This sequence belongs to the insulin family. Heterodimer of a B chain and an A chain linked by two disulfide bonds.

The protein localises to the secreted. Functionally, insulin decreases blood glucose concentration. It increases cell permeability to monosaccharides, amino acids and fatty acids. It accelerates glycolysis, the pentose phosphate cycle, and glycogen synthesis in liver. The sequence is that of Insulin (INS) from Rodentia sp.